Consider the following 442-residue polypeptide: Gamma-glutamyl phosphate reductase (442 aa).

Belongs to the gamma-glutamyl phosphate reductase family.

It is found in the cytoplasm. The enzyme catalyses L-glutamate 5-semialdehyde + phosphate + NADP(+) = L-glutamyl 5-phosphate + NADPH + H(+). Its pathway is amino-acid biosynthesis; L-proline biosynthesis; L-glutamate 5-semialdehyde from L-glutamate: step 2/2. Its function is as follows. Catalyzes the NADPH-dependent reduction of L-glutamate 5-phosphate into L-glutamate 5-semialdehyde and phosphate. The product spontaneously undergoes cyclization to form 1-pyrroline-5-carboxylate. This is Gamma-glutamyl phosphate reductase from Campylobacter curvus (strain 525.92).